The primary structure comprises 57 residues: Large ribosomal subunit protein bL32 (57 aa).

Residues Met-1–Arg-22 are compositionally biased toward basic residues. The segment at Met-1–Gly-35 is disordered.

Belongs to the bacterial ribosomal protein bL32 family.

The chain is Large ribosomal subunit protein bL32 (rpmF) from Synechocystis sp. (strain ATCC 27184 / PCC 6803 / Kazusa).